The sequence spans 553 residues: Glycerol-3-phosphate dehydrogenase (553 aa).

Position 13–41 (13–41) interacts with FAD; that stretch reads DLIVIGGGINGVGTARDGALRGLKTLLIE.

The protein belongs to the FAD-dependent glycerol-3-phosphate dehydrogenase family. FAD serves as cofactor.

The protein localises to the cytoplasm. The enzyme catalyses a quinone + sn-glycerol 3-phosphate = dihydroxyacetone phosphate + a quinol. In Synechocystis sp. (strain ATCC 27184 / PCC 6803 / Kazusa), this protein is Glycerol-3-phosphate dehydrogenase (glpD).